The sequence spans 179 residues: Large ribosomal subunit protein uL6 (179 aa).

Belongs to the universal ribosomal protein uL6 family. Part of the 50S ribosomal subunit.

This protein binds to the 23S rRNA, and is important in its secondary structure. It is located near the subunit interface in the base of the L7/L12 stalk, and near the tRNA binding site of the peptidyltransferase center. This chain is Large ribosomal subunit protein uL6, found in Legionella pneumophila (strain Paris).